The primary structure comprises 417 residues: Blood group Rh(CE) polypeptide (417 aa).

11 consecutive transmembrane segments (helical) span residues 12–32, 44–64, 77–97, 125–145, 172–192, 203–223, 238–258, 265–285, 287–307, 331–351, and 358–378; these read CLPLCALTLEAALILLFYFFT, LVASYQVGQDLTVMAALGLGF, VAFNLFMLALGVQWAILLDGF, ISAGAVLGKVNLAQLVVMVLV, FYVFAAYFGLTVAWCLPKPLP, TIPSLSAMLGALFLWMFWPSV, MFNTYYALAVSVVTAISGSSL, ISMTYVHSAVLAGGVAVGTSC, LIPSPWLAMVLGLVAGLISIG, IFSLLGLLGEITYIVLLVLHT, and MIGFQVLLSIGELSLAIVIAL.

It belongs to the ammonium transporter (TC 2.A.49) family. Rh subfamily. As to quaternary structure, heterotrimer; a RHCE monomer interacts with a RHAG homodimer. Component of the ankyrin-1 complex in the erythrocyte, composed of ANK1, RHCE, RHAG, SLC4A1, EPB42, GYPA, GYPB and AQP1. Interacts (via the N- and C-terminal) with ANK1 (via ANk 1-5 repeats); mediates the primary membrane attachment site for ANK1. Restricted to tissues or cell lines expressing erythroid characters. Isoform 4g and isoform RhPI-Alpha are expressed in immature erythroblasts but not in mature erythroblasts.

The protein resides in the membrane. Its function is as follows. Component of the ankyrin-1 complex, a multiprotein complex involved in the stability and shape of the erythrocyte membrane. Mediates the primary membrane attachment site for ANK1 when associated with RHAG. May participate in the ammonium and carbon dioxide transport through the heterotrimer form. This chain is Blood group Rh(CE) polypeptide, found in Homo sapiens (Human).